The sequence spans 161 residues: MNPRRKKRLTLAIALIGGVAAIASLLLYALNSNLNLFYTPSEIVNGKADTGVKPEAGQRIRVGGMVTVGSMVRDPNSLHVQFAVHDSLGGEIMVTYDDLLPDLFREGQGIVAQGVLGEDGKLAATEVLAKHDENYMPPEVAEAMGQKHEKLDYSQQKSAAQ.

The Cytoplasmic portion of the chain corresponds to Met1–Arg8. Residues Leu9–Ala29 form a helical; Signal-anchor for type II membrane protein membrane-spanning segment. The Periplasmic portion of the chain corresponds to Leu30–Gln161. Heme contacts are provided by His131 and Tyr135. The interval Pro138–Gln161 is disordered.

It belongs to the CcmE/CycJ family.

The protein resides in the cell inner membrane. Heme chaperone required for the biogenesis of c-type cytochromes. Transiently binds heme delivered by CcmC and transfers the heme to apo-cytochromes in a process facilitated by CcmF and CcmH. This is Cytochrome c-type biogenesis protein CcmE from Shewanella sp. (strain MR-4).